Consider the following 120-residue polypeptide: Chaperonin GroEL (120 aa).

An ATP-binding site is contributed by 23 to 27; that stretch reads DGTTT.

It belongs to the chaperonin (HSP60) family. In terms of assembly, forms a cylinder of 14 subunits composed of two heptameric rings stacked back-to-back. Interacts with the co-chaperonin GroES.

It localises to the cytoplasm. The enzyme catalyses ATP + H2O + a folded polypeptide = ADP + phosphate + an unfolded polypeptide.. Its function is as follows. Together with its co-chaperonin GroES, plays an essential role in assisting protein folding. The GroEL-GroES system forms a nano-cage that allows encapsulation of the non-native substrate proteins and provides a physical environment optimized to promote and accelerate protein folding. The protein is Chaperonin GroEL of Mycobacterium scrofulaceum.